Here is a 346-residue protein sequence, read N- to C-terminus: Ketol-acid reductoisomerase (NADP(+)) (346 aa).

One can recognise a KARI N-terminal Rossmann domain in the interval 1 to 189; the sequence is MQVYYDRDAD…GGGRSGIIET (189 aa). Residues 24-27, R48, S51, T53, and 83-86 contribute to the NADP(+) site; these read YGSQ and DEHQ. Residue H108 is part of the active site. G134 contributes to the NADP(+) binding site. The region spanning 190–335 is the KARI C-terminal knotted domain; sequence TFKEECETDL…EKLRAMMPWI (146 aa). Mg(2+) is bound by residues D198, E202, E234, and E238. S259 serves as a coordination point for substrate.

This sequence belongs to the ketol-acid reductoisomerase family. Requires Mg(2+) as cofactor.

It catalyses the reaction (2R)-2,3-dihydroxy-3-methylbutanoate + NADP(+) = (2S)-2-acetolactate + NADPH + H(+). The enzyme catalyses (2R,3R)-2,3-dihydroxy-3-methylpentanoate + NADP(+) = (S)-2-ethyl-2-hydroxy-3-oxobutanoate + NADPH + H(+). The protein operates within amino-acid biosynthesis; L-isoleucine biosynthesis; L-isoleucine from 2-oxobutanoate: step 2/4. It functions in the pathway amino-acid biosynthesis; L-valine biosynthesis; L-valine from pyruvate: step 2/4. In terms of biological role, involved in the biosynthesis of branched-chain amino acids (BCAA). Catalyzes an alkyl-migration followed by a ketol-acid reduction of (S)-2-acetolactate (S2AL) to yield (R)-2,3-dihydroxy-isovalerate. In the isomerase reaction, S2AL is rearranged via a Mg-dependent methyl migration to produce 3-hydroxy-3-methyl-2-ketobutyrate (HMKB). In the reductase reaction, this 2-ketoacid undergoes a metal-dependent reduction by NADPH to yield (R)-2,3-dihydroxy-isovalerate. The protein is Ketol-acid reductoisomerase (NADP(+)) of Sphingopyxis alaskensis (strain DSM 13593 / LMG 18877 / RB2256) (Sphingomonas alaskensis).